The primary structure comprises 99 residues: Large ribosomal subunit protein bL27 (99 aa).

Positions 1–10 are excised as a propeptide; the sequence is MKLIFDIQLF.

Belongs to the bacterial ribosomal protein bL27 family. Post-translationally, the N-terminus is cleaved by ribosomal processing cysteine protease Prp.

This Caldicellulosiruptor bescii (strain ATCC BAA-1888 / DSM 6725 / KCTC 15123 / Z-1320) (Anaerocellum thermophilum) protein is Large ribosomal subunit protein bL27.